Reading from the N-terminus, the 349-residue chain is Very-long-chain 3-oxoacyl-CoA reductase (349 aa).

Residues A29–L49 traverse the membrane as a helical segment. The NADP(+) site is built by L74, D129, D137, N156, Y223, K227, V256, and S258. Y223 (proton donor) is an active-site residue. The Lowers pKa of active site Tyr role is filled by K227.

Belongs to the short-chain dehydrogenases/reductases (SDR) family.

The protein resides in the endoplasmic reticulum membrane. It carries out the reaction a very-long-chain (3R)-3-hydroxyacyl-CoA + NADP(+) = a very-long-chain 3-oxoacyl-CoA + NADPH + H(+). It functions in the pathway lipid metabolism; fatty acid biosynthesis. Functionally, component of the microsomal membrane bound fatty acid elongation system, which produces the 26-carbon very long-chain fatty acids (VLCFA) from palmitate. Catalyzes the reduction of the 3-ketoacyl-CoA intermediate that is formed in each cycle of fatty acid elongation. VLCFAs serve as precursors for ceramide and sphingolipids. This Coccidioides immitis (strain RS) (Valley fever fungus) protein is Very-long-chain 3-oxoacyl-CoA reductase.